A 517-amino-acid chain; its full sequence is Glucans biosynthesis protein G (517 aa).

The signal sequence occupies residues 1–28; that stretch reads MKHKLQMMKMRWLSAAVMLTLYTSSSWA.

The protein belongs to the OpgD/OpgG family.

It localises to the periplasm. It participates in glycan metabolism; osmoregulated periplasmic glucan (OPG) biosynthesis. Its function is as follows. Involved in the biosynthesis of osmoregulated periplasmic glucans (OPGs). The chain is Glucans biosynthesis protein G from Escherichia coli O1:K1 / APEC.